The chain runs to 522 residues: F-box only protein 7 (522 aa).

The ubiquitin-like stretch occupies residues 1–87 (MKLRVRLQKR…EDAIAAPNLP (87 aa)). Over residues 88-132 (SSTVSEHSSVQNNDQPSLATSSSQSNIQDAQLHDSLQGQATQSEV) the composition is skewed to polar residues. The tract at residues 88-151 (SSTVSEHSSV…GQHFEAEAVP (64 aa)) is disordered. The important for interaction with PINK1 stretch occupies residues 91–128 (VSEHSSVQNNDQPSLATSSSQSNIQDAQLHDSLQGQAT). Residues 128-168 (TQSEVWNDDSVSGPGQHFEAEAVPDVVDVEEGTGYYLAEPM) are important for interaction with CDK6. An important for dimerization and interaction with PSMF1 region spans residues 179–323 (PHSLEILYQS…PLLAFTRQAL (145 aa)). The F-box domain maps to 328–374 (VFGLVVLPLELKLRIFRLLDVRSVLSLSAVCRDLCITSNDQLLWRCL). Positions 380-522 (RDGSIRGRDT…WPTDSRLPFM (143 aa)) are important for interaction with CDK6. Arg431 and Arg451 each carry omega-N-methylarginine. The short motif at 481–484 (RFDP) is the RFDP motif element. A disordered region spans residues 484-522 (PVGPLPGPNPILPGRGGPSDRFPLRPSRGWPTDSRLPFM). Asymmetric dimethylarginine is present on Arg518.

In terms of assembly, part of the SCF (SKP1-CUL1-F-box) E3 ubiquitin-protein ligase complex SCF(FBXO7) formed of CUL1, SKP1, RBX1 and FBXO7. Interacts via its C-terminal proline-rich region with DLGAP5. Interacts with BIRC2. Interacts with CDK6 and promotes its interaction with D-type cyclin. Interacts (via the N-terminal Ubl domain) with PRKN. Interacts (via N-terminal region) with PINK1. Interacts with PSMF1.

It is found in the cytoplasm. The protein resides in the nucleus. It localises to the mitochondrion. Its subcellular location is the cytosol. It participates in protein modification; protein ubiquitination. Functionally, substrate recognition component of a SCF (SKP1-CUL1-F-box protein) E3 ubiquitin-protein ligase complex which mediates the ubiquitination and subsequent proteasomal degradation of target proteins and plays a role in several biological processes such as cell cycle, cell proliferation, or maintenance of chromosome stability. Recognizes and ubiquitinates BIRC2 and the cell cycle regulator DLGAP5. Plays a role downstream of PINK1 in the clearance of damaged mitochondria via selective autophagy (mitophagy) by targeting PRKN to dysfunctional depolarized mitochondria. Promotes MFN1 ubiquitination. Mediates the ubiquitination and proteasomal degradation of UXT isoform 2, thereby impairing the NF-kappa-B signaling pathway. Inhibits NF-kappa-B pathway also by promoting the ubiquitinatioin of TRAF2. Affects the assembly state and activity of the proteasome in the cells including neurons by ubiquitinating the proteasomal subunit PSMA2 via 'Lys-63'-linked polyubiquitin chains. Promotes 'Lys-48'-linked polyubiquitination SIRT7, leading to the hydrogen peroxide-induced cell death. This Bos taurus (Bovine) protein is F-box only protein 7 (FBXO7).